The sequence spans 576 residues: Laccase-1 (576 aa).

The N-terminal stretch at 1 to 19 (MARTTFLVSVSLFVSAVLA) is a signal peptide. Plastocyanin-like domains lie at 21 to 145 (TVEY…LVIY) and 157 to 304 (VDDE…LVYE). The N-linked (GlcNAc...) asparagine glycan is linked to N41. Residues H82, H84, H127, and H129 each coordinate Cu cation. An intrachain disulfide couples C103 to C562. N-linked (GlcNAc...) asparagine glycans are attached at residues N182, N228, N294, and N368. One can recognise a Plastocyanin-like 3 domain in the interval 376-576 (DESKLVPLEY…NWLKSNPGQL (201 aa)). Cu cation is bound by residues H471, H474, H476, H523, C524, H525, and H529.

Belongs to the multicopper oxidase family. Homodimer. Requires Cu cation as cofactor. In mycelia, at a lower level than LCC4.

The protein localises to the secreted. It catalyses the reaction 4 hydroquinone + O2 = 4 benzosemiquinone + 2 H2O. In terms of biological role, lignin degradation and detoxification of lignin-derived products. In Thanatephorus cucumeris (Black scurf of potato), this protein is Laccase-1 (LCC1).